The primary structure comprises 392 residues: B2 bradykinin receptor (392 aa).

The Extracellular segment spans residues 1-61; sequence MPCSWKLLGF…EWWSWLNAIQ (61 aa). Asn29 and Asn40 each carry an N-linked (GlcNAc...) asparagine glycan. Residues 62 to 85 form a helical membrane-spanning segment; that stretch reads APFLWVLFLLAALENLFVLSVFFL. The Cytoplasmic portion of the chain corresponds to 86-94; sequence HKNSCTVAE. A helical membrane pass occupies residues 95-119; sequence IYLGNLAAADLILACGLPFWAITIA. Over 120-132 the chain is Extracellular; the sequence is NNFDWVFGEVLCR. Cysteines 131 and 212 form a disulfide. A helical transmembrane segment spans residues 133-154; it reads VVNTMIYMNLYSSICFLMLVSI. Residues 155-176 are Cytoplasmic-facing; it reads DRYLALVKTMSMGRMRGVRWAK. Tyr157 carries the post-translational modification Phosphotyrosine. Residues 177 to 199 form a helical membrane-spanning segment; the sequence is LYSLVIWGCTLLLSSPMLVFRTM. At 200-222 the chain is on the extracellular side; sequence REYSEEGHNVTACVIVYPSRSWE. Asn208 carries N-linked (GlcNAc...) asparagine glycosylation. Residues 223–249 traverse the membrane as a helical segment; the sequence is VFTNVLLNLVGFLLPLSVITFCTVRIL. The Cytoplasmic segment spans residues 250–268; it reads QVLRNNEMKKFKEVQTERK. A helical membrane pass occupies residues 269-293; sequence ATVLVLAVLGLFVLCWVPFQISTFL. Residues 294–312 are Extracellular-facing; it reads DTLLRLGVLSGCWDEHAVD. The helical transmembrane segment at 313–336 threads the bilayer; sequence VITQISSYVAYSNSGLNPLVYVIV. At 337–392 the chain is on the cytoplasmic side; the sequence is GKRFRKKSREVYRVLCQKGGCMGEPVQMENSMGTLRTSISVERQIHKLQDWAGKKQ. Tyr348 is modified (phosphotyrosine). The S-palmitoyl cysteine moiety is linked to residue Cys352. The residue at position 367 (Ser367) is a Phosphoserine. Thr370 carries the post-translational modification Phosphothreonine. 2 positions are modified to phosphoserine; by GRK6: Ser374 and Ser376.

This sequence belongs to the G-protein coupled receptor 1 family. Bradykinin receptor subfamily. BDKRB2 sub-subfamily. In terms of assembly, forms a complex with PECAM1 and GNAQ. Interacts with PECAM1.

The protein resides in the cell membrane. Its function is as follows. Receptor for bradykinin. It is associated with G proteins that activate a phosphatidylinositol-calcium second messenger system. This Mus musculus (Mouse) protein is B2 bradykinin receptor (Bdkrb2).